A 275-amino-acid chain; its full sequence is NH(3)-dependent NAD(+) synthetase (275 aa).

Position 47–54 (47–54) interacts with ATP; sequence GISGGQDS. A Mg(2+)-binding site is contributed by aspartate 53. Arginine 141 serves as a coordination point for deamido-NAD(+). Residue threonine 161 coordinates ATP. A Mg(2+)-binding site is contributed by glutamate 166. Deamido-NAD(+) contacts are provided by lysine 174 and aspartate 181. ATP-binding residues include lysine 190 and threonine 212. 261–262 serves as a coordination point for deamido-NAD(+); the sequence is HK.

The protein belongs to the NAD synthetase family. As to quaternary structure, homodimer.

It carries out the reaction deamido-NAD(+) + NH4(+) + ATP = AMP + diphosphate + NAD(+) + H(+). It participates in cofactor biosynthesis; NAD(+) biosynthesis; NAD(+) from deamido-NAD(+) (ammonia route): step 1/1. Functionally, catalyzes the ATP-dependent amidation of deamido-NAD to form NAD. Uses ammonia as a nitrogen source. In Latilactobacillus sakei subsp. sakei (strain 23K) (Lactobacillus sakei subsp. sakei), this protein is NH(3)-dependent NAD(+) synthetase.